Here is a 435-residue protein sequence, read N- to C-terminus: Acetylcholine receptor-like protein cup-4 (435 aa).

An N-terminal signal peptide occupies residues 1-24 (MRLLLIFTVIFVFYLAILKRDVNA). N-linked (GlcNAc...) asparagine glycans are attached at residues Asn-41, Asn-68, Asn-237, and Asn-249. The next 2 helical transmembrane spans lie at 298-318 (VSFF…AIYL) and 341-361 (ITLF…HGVL). Asn-403 carries an N-linked (GlcNAc...) asparagine glycan. The helical transmembrane segment at 413 to 433 (PLAGLAMFVYFVIMFILYLVV) threads the bilayer.

This sequence belongs to the ligand-gated ion channel (TC 1.A.9) family. Acetylcholine receptor (TC 1.A.9.1) subfamily.

Its subcellular location is the cytoplasmic vesicle membrane. Its function is as follows. Thought to regulate endocytosis in coelomocytes through modulation of phospholipase C activity. Possible acetylcholine receptor. The chain is Acetylcholine receptor-like protein cup-4 from Caenorhabditis briggsae.